The primary structure comprises 214 residues: CASP-like protein UU5 (214 aa).

The disordered stretch occupies residues 1 to 20 (MSTVAQDSAPGGGKIQDAME). Residues 1-57 (MSTVAQDSAPGGGKIQDAMEQGAPGASSAAVVPEGGHYTQTPSPAFQAVKKNINHMS) lie on the Cytoplasmic side of the membrane. The helical transmembrane segment at 58–78 (AFSLGLRVAEFVLSVIAFSLM) threads the bilayer. At 79–99 (ASADQNGAVYSTFTSYSFVLA) the chain is on the extracellular side. Residues 100 to 120 (VNVLVVFYTIGQIIMSVLLLV) form a helical membrane-spanning segment. Residues 121 to 138 (SGSTPKKIYLFITFGCDQ) are Cytoplasmic-facing. A helical membrane pass occupies residues 139–159 (LSAFLLMAAGAAGASVALIIN). Residues 160 to 193 (RGGVTDAYGNGCIDGKITSFCSHAQASVAFTFLS) are Extracellular-facing. The chain crosses the membrane as a helical span at residues 194–214 (FFCMVISSLLGVYSLAPYLIL).

This sequence belongs to the Casparian strip membrane proteins (CASP) family. Homodimer and heterodimers.

The protein localises to the cell membrane. This is CASP-like protein UU5 from Physcomitrium patens (Spreading-leaved earth moss).